The sequence spans 157 residues: Probable succinate transporter subunit YjjB (157 aa).

4 helical membrane passes run 8–28, 50–70, 87–107, and 129–149; these read LALA…AMVF, MILM…SMLG, VFTV…TAMI, and FLTA…PGLW.

Belongs to the ThrE exporter (TC 2.A.79) family. In terms of assembly, the transporter is composed of YjjB and YjjP.

Its subcellular location is the cell inner membrane. Involved in succinate export with YjjP. Both proteins are required for export. The protein is Probable succinate transporter subunit YjjB of Escherichia coli O157:H7 (strain EC4115 / EHEC).